Reading from the N-terminus, the 313-residue chain is MITDTFSRKSEYSTNKLRKRLRRLVGTAIADFNMIESGDRIMVCLSGGKDSYALLDILRNLQAHAPLDFELIAVNLDQKQPGFPEHVLPGYLSEINMPFRIVEQDTYSVVKRVIPEGKTTCSLCSRLRRGVLYRVATELGATKIALGHHRDDILETFFLNMFYGGKLKAMPPKLVSDDGCHVVIRPLAYCKEKDLAAYAQLVQFPIIPCNLCGSQPNLQRQVIKEMMQQWNKKYPGRLETMFTALQNIQLSHLADTSRYDFVGIKPHGIATEEGDKAFDEELLPDSPVGMNHDDAASELDEACSTEAVQGGTI.

The PP-loop motif motif lies at 46 to 51 (SGGKDS). [4Fe-4S] cluster is bound by residues cysteine 121, cysteine 124, and cysteine 212.

The protein belongs to the TtcA family. As to quaternary structure, homodimer. Requires Mg(2+) as cofactor. [4Fe-4S] cluster is required as a cofactor.

The protein localises to the cytoplasm. It carries out the reaction cytidine(32) in tRNA + S-sulfanyl-L-cysteinyl-[cysteine desulfurase] + AH2 + ATP = 2-thiocytidine(32) in tRNA + L-cysteinyl-[cysteine desulfurase] + A + AMP + diphosphate + H(+). It participates in tRNA modification. Functionally, catalyzes the ATP-dependent 2-thiolation of cytidine in position 32 of tRNA, to form 2-thiocytidine (s(2)C32). The sulfur atoms are provided by the cysteine/cysteine desulfurase (IscS) system. The chain is tRNA-cytidine(32) 2-sulfurtransferase from Nitrosomonas eutropha (strain DSM 101675 / C91 / Nm57).